The sequence spans 360 residues: DNA replication and repair protein RecF (360 aa).

G30 to T37 serves as a coordination point for ATP.

Belongs to the RecF family.

The protein resides in the cytoplasm. Functionally, the RecF protein is involved in DNA metabolism; it is required for DNA replication and normal SOS inducibility. RecF binds preferentially to single-stranded, linear DNA. It also seems to bind ATP. The sequence is that of DNA replication and repair protein RecF from Shewanella baltica (strain OS223).